The sequence spans 160 residues: Probable prefoldin subunit 5 (160 aa).

It belongs to the prefoldin subunit alpha family. As to quaternary structure, heterohexamer of two PFD-alpha type and four PFD-beta type subunits.

In terms of biological role, binds specifically to cytosolic chaperonin (c-CPN) and transfers target proteins to it. Binds to nascent polypeptide chain and promotes folding in an environment in which there are many competing pathways for nonnative proteins. The polypeptide is Probable prefoldin subunit 5 (pfdn5) (Dictyostelium discoideum (Social amoeba)).